Reading from the N-terminus, the 144-residue chain is 3-hydroxyacyl-[acyl-carrier-protein] dehydratase FabZ (144 aa).

Histidine 51 is a catalytic residue.

The protein belongs to the thioester dehydratase family. FabZ subfamily.

It is found in the cytoplasm. It carries out the reaction a (3R)-hydroxyacyl-[ACP] = a (2E)-enoyl-[ACP] + H2O. In terms of biological role, involved in unsaturated fatty acids biosynthesis. Catalyzes the dehydration of short chain beta-hydroxyacyl-ACPs and long chain saturated and unsaturated beta-hydroxyacyl-ACPs. This Lactococcus lactis subsp. lactis (strain IL1403) (Streptococcus lactis) protein is 3-hydroxyacyl-[acyl-carrier-protein] dehydratase FabZ (fabZ2).